The following is a 274-amino-acid chain: Eukaryotic translation initiation factor 3 subunit G (274 aa).

Phosphoserine is present on residues S146, S164, and S171. Residues A149 to P170 form a disordered region. The region spanning T191–K270 is the RRM domain.

It belongs to the eIF-3 subunit G family. Component of the eukaryotic translation initiation factor 3 (eIF-3) complex.

It localises to the cytoplasm. In terms of biological role, RNA-binding component of the eukaryotic translation initiation factor 3 (eIF-3) complex, which is involved in protein synthesis of a specialized repertoire of mRNAs and, together with other initiation factors, stimulates binding of mRNA and methionyl-tRNAi to the 40S ribosome. The eIF-3 complex specifically targets and initiates translation of a subset of mRNAs involved in cell proliferation. This subunit can bind 18S rRNA. This Meyerozyma guilliermondii (strain ATCC 6260 / CBS 566 / DSM 6381 / JCM 1539 / NBRC 10279 / NRRL Y-324) (Yeast) protein is Eukaryotic translation initiation factor 3 subunit G.